The primary structure comprises 212 residues: MNNSLIVRQLGLQDYQEIWHKMQDFTDTRNAETQDEIWLVQHYPVFTQGQAGKPEHLLQRSEIPVVQSDRGGQITYHAPGQQVMYVLIDIKRHKNLNVRQLVTALEQTVVKTLAEYGIESYPKPDAPGVYVDGKKICSLGLRIRRGCSFHGLALNINMDLNPFHYINPCGYAGLEMCQLADFVNQDEADWDNVSAKLIKHFADLLGYNITTL.

The 179-residue stretch at 31–209 (AETQDEIWLV…HFADLLGYNI (179 aa)) folds into the BPL/LPL catalytic domain. Substrate contacts are provided by residues 70–77 (RGGQITYH), 138–140 (SLG), and 151–153 (GLA). The active-site Acyl-thioester intermediate is Cys169.

This sequence belongs to the LipB family.

The protein resides in the cytoplasm. The catalysed reaction is octanoyl-[ACP] + L-lysyl-[protein] = N(6)-octanoyl-L-lysyl-[protein] + holo-[ACP] + H(+). Its pathway is protein modification; protein lipoylation via endogenous pathway; protein N(6)-(lipoyl)lysine from octanoyl-[acyl-carrier-protein]: step 1/2. Catalyzes the transfer of endogenously produced octanoic acid from octanoyl-acyl-carrier-protein onto the lipoyl domains of lipoate-dependent enzymes. Lipoyl-ACP can also act as a substrate although octanoyl-ACP is likely to be the physiological substrate. This is Octanoyltransferase from Haemophilus influenzae (strain PittGG).